We begin with the raw amino-acid sequence, 86 residues long: Small ribosomal subunit protein uS15 (86 aa).

This sequence belongs to the universal ribosomal protein uS15 family. As to quaternary structure, part of the 30S ribosomal subunit. Forms a bridge to the 50S subunit in the 70S ribosome, contacting the 23S rRNA.

One of the primary rRNA binding proteins, it binds directly to 16S rRNA where it helps nucleate assembly of the platform of the 30S subunit by binding and bridging several RNA helices of the 16S rRNA. Functionally, forms an intersubunit bridge (bridge B4) with the 23S rRNA of the 50S subunit in the ribosome. The sequence is that of Small ribosomal subunit protein uS15 from Mycoplasma genitalium (strain ATCC 33530 / DSM 19775 / NCTC 10195 / G37) (Mycoplasmoides genitalium).